We begin with the raw amino-acid sequence, 383 residues long: tRNA(Met) cytidine acetate ligase (383 aa).

ATP-binding positions include 7-20 (IAEFNPLHSGHEFL), Gly-101, Asn-153, and 178-179 (RI).

It belongs to the TmcAL family.

The protein resides in the cytoplasm. It catalyses the reaction cytidine(34) in elongator tRNA(Met) + acetate + ATP = N(4)-acetylcytidine(34) in elongator tRNA(Met) + AMP + diphosphate. Its function is as follows. Catalyzes the formation of N(4)-acetylcytidine (ac(4)C) at the wobble position of elongator tRNA(Met), using acetate and ATP as substrates. First activates an acetate ion to form acetyladenylate (Ac-AMP) and then transfers the acetyl group to tRNA to form ac(4)C34. This chain is tRNA(Met) cytidine acetate ligase, found in Lactobacillus acidophilus (strain ATCC 700396 / NCK56 / N2 / NCFM).